A 117-amino-acid polypeptide reads, in one-letter code: Immunoglobulin heavy variable 3-48 (117 aa).

An N-terminal signal peptide occupies residues 1–19 (MELGLCWVFLVAILEGVQC). A framework-1 region spans residues 20–44 (EVQLVESGGGLVQPGGSLRLSCAAS). One can recognise an Ig-like domain in the interval 20 to 117 (EVQLVESGGG…EDTAVYYCAR (98 aa)). Residues cysteine 41 and cysteine 115 are joined by a disulfide bond. Residues 45 to 52 (GFTFSSYE) are complementarity-determining-1. Residues 53-69 (MNWVRQAPGKGLEWVSY) are framework-2. Residues 70-77 (ISSSGSTI) form a complementarity-determining-2 region. Residues 78 to 115 (YYADSVKGRFTISRDNAKNSLYLQMNSLRAEDTAVYYC) are framework-3. Residues 116-117 (AR) form a complementarity-determining-3 region.

Immunoglobulins are composed of two identical heavy chains and two identical light chains; disulfide-linked. In terms of processing, the N-terminus is blocked.

It localises to the secreted. The protein localises to the cell membrane. Its function is as follows. V region of the variable domain of immunoglobulin heavy chains that participates in the antigen recognition. Immunoglobulins, also known as antibodies, are membrane-bound or secreted glycoproteins produced by B lymphocytes. In the recognition phase of humoral immunity, the membrane-bound immunoglobulins serve as receptors which, upon binding of a specific antigen, trigger the clonal expansion and differentiation of B lymphocytes into immunoglobulins-secreting plasma cells. Secreted immunoglobulins mediate the effector phase of humoral immunity, which results in the elimination of bound antigens. The antigen binding site is formed by the variable domain of one heavy chain, together with that of its associated light chain. Thus, each immunoglobulin has two antigen binding sites with remarkable affinity for a particular antigen. The variable domains are assembled by a process called V-(D)-J rearrangement and can then be subjected to somatic hypermutations which, after exposure to antigen and selection, allow affinity maturation for a particular antigen. The polypeptide is Immunoglobulin heavy variable 3-48 (Homo sapiens (Human)).